The sequence spans 218 residues: Ras-related protein Rab-4A (218 aa).

Positions 23, 24, 25, 26, 27, and 28 each coordinate GDP. Glycine 23, threonine 24, glycine 25, lysine 26, serine 27, cysteine 28, serine 42, histidine 44, and threonine 45 together coordinate GTP. Serine 27 contributes to the Mg(2+) binding site. Positions 44 to 49 (HTIGVE) match the Switch 1 motif. Positions 45 and 68 each coordinate Mg(2+). The Switch 2 signature appears at 70-79 (AGQERFRSVT). Glycine 71 provides a ligand contact to GTP. Residue glutamine 72 is modified to 5-glutamyl serotonin. GDP contacts are provided by asparagine 126, lysine 127, aspartate 129, alanine 157, and leucine 158. Residues asparagine 126, lysine 127, aspartate 129, alanine 157, and leucine 158 each coordinate GTP. A Phosphoserine modification is found at serine 190. Serine 204 is modified (phosphoserine; by CDK1). 2 S-geranylgeranyl cysteine lipidation sites follow: cysteine 216 and cysteine 218. Cysteine 218 is modified (cysteine methyl ester).

Belongs to the small GTPase superfamily. Rab family. As to quaternary structure, interacts with SGSM1, SGSM2 and SGSM3. Interacts with RAB11FIP1, RABEP1, ZFYVE20 and RUFY1. Interacts (membrane-bound form) with NDRG1; the interaction involves NDRG1 in vesicular recycling of E-cadherin. Interacts (in GTP-bound form) with GRIPAP1 (via N-terminus). Interacts with RABEP1 and RBSN. Does not interact with HPS4. Interacts with RABEP2; this interaction may mediate VEGFR2 cell surface expression. Mg(2+) serves as cofactor. Post-translationally, phosphorylated by CDK1 kinase during mitosis. Serotonylation of Gln-72 by TGM2 during activation and aggregation of platelets leads to constitutive activation of GTPase activity.

It localises to the membrane. It is found in the cytoplasm. The protein resides in the early endosome membrane. Its subcellular location is the recycling endosome membrane. The enzyme catalyses GTP + H2O = GDP + phosphate + H(+). Regulated by guanine nucleotide exchange factors (GEFs) which promote the exchange of bound GDP for free GTP. Regulated by GTPase activating proteins (GAPs) which increase the GTP hydrolysis activity. Inhibited by GDP dissociation inhibitors (GDIs). Functionally, the small GTPases Rab are key regulators of intracellular membrane trafficking, from the formation of transport vesicles to their fusion with membranes. Rabs cycle between an inactive GDP-bound form and an active GTP-bound form that is able to recruit to membranes different sets of downstream effectors directly responsible for vesicle formation, movement, tethering and fusion. RAB4A is involved in protein transport. Also plays a role in vesicular traffic. Mediates VEGFR2 endosomal trafficking to enhance VEGFR2 signaling. Acts as a regulator of platelet alpha-granule release during activation and aggregation of platelets. The chain is Ras-related protein Rab-4A from Homo sapiens (Human).